Here is a 367-residue protein sequence, read N- to C-terminus: Leucine-rich repeat-containing protein 28 (367 aa).

9 LRR repeats span residues 16–36, 42–63, 66–87, 89–110, 112–133, 135–156, 158–180, 181–202, and 204–226; these read KHKN…ELLK, YLER…LAQK, NLVE…IGSL, KLQC…IGRL, ALRH…VGDL, ELQT…LHMC, SLQY…CQLP, SLNE…LGRS, and ELQY…LYNK.

This is Leucine-rich repeat-containing protein 28 (LRRC28) from Homo sapiens (Human).